A 212-amino-acid chain; its full sequence is Large ribosomal subunit protein bL25 (212 aa).

The interval 179-212 is disordered; that stretch reads EPEEEELPEDDEAAAEGEDAAAGEEAEAPAESED.

The protein belongs to the bacterial ribosomal protein bL25 family. CTC subfamily. As to quaternary structure, part of the 50S ribosomal subunit; part of the 5S rRNA/L5/L18/L25 subcomplex. Contacts the 5S rRNA. Binds to the 5S rRNA independently of L5 and L18.

Functionally, this is one of the proteins that binds to the 5S RNA in the ribosome where it forms part of the central protuberance. This Corynebacterium urealyticum (strain ATCC 43042 / DSM 7109) protein is Large ribosomal subunit protein bL25.